We begin with the raw amino-acid sequence, 1019 residues long: MPRSSATARKSHSNRHENGSANTGKKVAKQKSNGHLNGNLNGGSASSSLSSSQVDLPSSRSSSDPVIPTTTATSTKLNGTPDSSKGDCNAPDHLNGYAKGNTDMSYVQNNGVASQTGGDVAGPASRRTEKSATGNKRSPSNASINPLQLASTILKSCPMYDTIAILIFLLQLPPMVLTLVQFLFASLTFLPPSGASAGSLTSNFDIFQGPAGTPSLGTMIAMDGFCLLIWGLFMWTWAQNFALDLAHVQVAITLGGGGFGKNGGVNTLCVGIVLIMHLVRSKGIQDFVIGHLLSSNIISPDMLSQYSHLLPTEFRRTEPQTSPSWLRSLLAVHILAQAGTAMARRSMAKNRTPNPPRTGKRIDTEASAGSQTQIDSAFESGASVSSYIGADGQIVTPAAHKDGRDRLLSAKKRRRQANQVRSRQPFWAALASTKITVMREYEHSRALSKTARGLPMTEDDLQGLSLDDGLVWITEIDSSTIKFAAGDFSSADDSSGSGACEAGCLGSEDMEPFYVCVNGALWATATICKVHDAPKGSSMVHWRGEISGLAPNCAYTCSFVRSDTDEEICVISVKTPATNDAEQVSSVSTPPQPSYRPSSPTTTLKNSIVNAEAKLNEKRSRLRKAKNDHKLVISKIRKELDNYNHRLHSGTDENRQKQRSLQLERNIRQTEEATALLEDQLDNLENVPDEELRKWSDQKAKYEHELGLLNSAKEELASARSAVAREVSSLETELSSAIQRRERLQSRRTRINEQYERIVSANAQGLNERERRAAEQFAREQDQAKLEATFNEQFASIGQSVQEYQLRAQQIWQQCDAIEQAIQQQHQQMLLDPGPLTPEGNLPGTNPFSESALPLGALTSTAPSNRSLLGLSFPPLKSSPLQTASSPVGASSSHPTSPVQQPSYLNFPTSPLVNASSHLDSDFVYRDRSFSNRSARSSLYGSDFMDSSRRQPFQLDLSELLADKRSPGSDSNTALNSGLRPVSSPFQRAGSRGSGSGSNGSGGSGSGSGSPSSVYGKTN.

The tract at residues 1–142 (MPRSSATARK…TGNKRSPSNA (142 aa)) is disordered. Residues 33–63 (NGHLNGNLNGGSASSSLSSSQVDLPSSRSSS) show a composition bias toward low complexity. Composition is skewed to polar residues over residues 68–83 (PTTT…TPDS), 102–117 (TDMS…SQTG), and 131–142 (SATGNKRSPSNA). Transmembrane regions (helical) follow at residues 163–183 (IAIL…VQFL), 216–236 (LGTM…FMWT), and 259–279 (FGKN…MHLV). 5 disordered regions span residues 343–372 (ARRS…GSQT), 580–603 (DAEQ…PTTT), 831–859 (LDPG…GALT), 879–905 (SPLQ…PSYL), and 963–1019 (DKRS…GKTN). Residues 602-788 (TTLKNSIVNA…REQDQAKLEA (187 aa)) adopt a coiled-coil conformation. Over residues 992–1008 (RGSGSGSNGSGGSGSGS) the composition is skewed to gly residues.

The protein belongs to the acrB family.

Its subcellular location is the membrane. In terms of biological role, component of the regulatory network controlling carbon source utilization through ubiquitination and deubiquitination involving creA, creB, creC, creD and acrB. Involved in resistance to acriflavine, and required for normal growth on a range of sole carbon sources, including fructose, cellobiose, raffinose, and starch, and reduced utilization of amino acids, including GABA and beta-alanine, as sole carbon and nitrogen sources. The protein is Probable ubiquitination network signaling protein acrB (acrB) of Neosartorya fischeri (strain ATCC 1020 / DSM 3700 / CBS 544.65 / FGSC A1164 / JCM 1740 / NRRL 181 / WB 181) (Aspergillus fischerianus).